A 478-amino-acid chain; its full sequence is Ribosomal RNA small subunit methyltransferase F (478 aa).

Residues 126–132, glutamate 150, aspartate 177, and aspartate 195 each bind S-adenosyl-L-methionine; that span reads AAAPGSK. Cysteine 248 functions as the Nucleophile in the catalytic mechanism.

The protein belongs to the class I-like SAM-binding methyltransferase superfamily. RsmB/NOP family.

The protein resides in the cytoplasm. The enzyme catalyses cytidine(1407) in 16S rRNA + S-adenosyl-L-methionine = 5-methylcytidine(1407) in 16S rRNA + S-adenosyl-L-homocysteine + H(+). Specifically methylates the cytosine at position 1407 (m5C1407) of 16S rRNA. The chain is Ribosomal RNA small subunit methyltransferase F from Erwinia tasmaniensis (strain DSM 17950 / CFBP 7177 / CIP 109463 / NCPPB 4357 / Et1/99).